Reading from the N-terminus, the 153-residue chain is Prostaglandin E synthase (153 aa).

Over 1–13 (MPPPSLAMVSGQA) the chain is Lumenal. Residues 14 to 42 (LPAFLLCSTLLVIKMYAVAVITGQVRLRK) form a helical membrane-spanning segment. Arg39 contacts glutathione. The Cytoplasmic segment spans residues 43–61 (KAFANPEDALRHGGLQFHR). The chain crosses the membrane as a helical span at residues 62–91 (DDQDVERCLRAHRNDMETIYPFLFLGLVYS). 74-78 (RNDME) contributes to the glutathione binding site. Over 92 to 96 (FLGPD) the chain is Lumenal. A helical transmembrane segment spans residues 97 to 120 (PFVAQMHFLVFFLGRMVHTVAYLG). Residues His114 and Tyr118 each contribute to the glutathione site. Over 121–124 (KLRA) the chain is Cytoplasmic. The helical transmembrane segment at 125–153 (PTRSLAYTVAQLPCASMALQIVWEAARHL) threads the bilayer. 127 to 131 (RSLAY) serves as a coordination point for glutathione.

Belongs to the MAPEG family. Homotrimer. The cofactor is glutathione.

The protein resides in the membrane. Its subcellular location is the cytoplasm. It is found in the perinuclear region. The enzyme catalyses prostaglandin H2 = prostaglandin E2. The catalysed reaction is 2-glyceryl-prostaglandin H2 = 2-glyceryl-prostaglandin E2. It catalyses the reaction prostaglandin G2 = (15S)-15-hydroperoxy-prostaglandin E2. It carries out the reaction 1-chloro-2,4-dinitrobenzene + glutathione = 2,4-dinitrophenyl-S-glutathione + chloride + H(+). The enzyme catalyses (5S)-hydroperoxy-(6E,8Z,11Z,14Z)-eicosatetraenoate + 2 glutathione = (5S)-hydroxy-(6E,8Z,11Z,14Z)-eicosatetraenoate + glutathione disulfide + H2O. The protein operates within lipid metabolism; prostaglandin biosynthesis. In terms of biological role, terminal enzyme of the cyclooxygenase (COX)-2-mediated prostaglandin E2 (PGE2) biosynthetic pathway. Catalyzes the glutathione-dependent oxidoreduction of prostaglandin endoperoxide H2 (PGH2) to prostaglandin E2 (PGE2) in response to inflammatory stimuli. Plays a key role in inflammation response, fever and pain. Also catalyzes the oxidoreduction of endocannabinoids into prostaglandin glycerol esters and PGG2 into 15-hydroperoxy-PGE2. In addition, displays low glutathione transferase and glutathione-dependent peroxidase activities, toward 1-chloro-2,4-dinitrobenzene and 5-hydroperoxyicosatetraenoic acid (5-HPETE), respectively. The chain is Prostaglandin E synthase (PTGES) from Equus caballus (Horse).